Here is a 132-residue protein sequence, read N- to C-terminus: Small ribosomal subunit protein uS11 (132 aa).

This sequence belongs to the universal ribosomal protein uS11 family. In terms of assembly, part of the 30S ribosomal subunit.

Its function is as follows. Located on the platform of the 30S subunit. This Thermoplasma volcanium (strain ATCC 51530 / DSM 4299 / JCM 9571 / NBRC 15438 / GSS1) protein is Small ribosomal subunit protein uS11.